Reading from the N-terminus, the 103-residue chain is MGKTVKIRKDDMVLVIAGKDRGKRGAVLRVLRDVDRVLVQGLNMRKKTIRRKSAQDEGGIMEVEAPIHISNVMIMGKKGPTRVGYRMENGKKVRVCRKTGEVL.

Belongs to the universal ribosomal protein uL24 family. As to quaternary structure, part of the 50S ribosomal subunit.

One of two assembly initiator proteins, it binds directly to the 5'-end of the 23S rRNA, where it nucleates assembly of the 50S subunit. Functionally, one of the proteins that surrounds the polypeptide exit tunnel on the outside of the subunit. This is Large ribosomal subunit protein uL24 from Treponema pallidum (strain Nichols).